We begin with the raw amino-acid sequence, 233 residues long: Leucyl/phenylalanyl-tRNA--protein transferase (233 aa).

It belongs to the L/F-transferase family.

It is found in the cytoplasm. The catalysed reaction is N-terminal L-lysyl-[protein] + L-leucyl-tRNA(Leu) = N-terminal L-leucyl-L-lysyl-[protein] + tRNA(Leu) + H(+). It catalyses the reaction N-terminal L-arginyl-[protein] + L-leucyl-tRNA(Leu) = N-terminal L-leucyl-L-arginyl-[protein] + tRNA(Leu) + H(+). It carries out the reaction L-phenylalanyl-tRNA(Phe) + an N-terminal L-alpha-aminoacyl-[protein] = an N-terminal L-phenylalanyl-L-alpha-aminoacyl-[protein] + tRNA(Phe). Its function is as follows. Functions in the N-end rule pathway of protein degradation where it conjugates Leu, Phe and, less efficiently, Met from aminoacyl-tRNAs to the N-termini of proteins containing an N-terminal arginine or lysine. This Anaeromyxobacter dehalogenans (strain 2CP-1 / ATCC BAA-258) protein is Leucyl/phenylalanyl-tRNA--protein transferase.